The following is a 372-amino-acid chain: 4-hydroxy-3-methylbut-2-en-1-yl diphosphate synthase (flavodoxin) (372 aa).

[4Fe-4S] cluster is bound by residues cysteine 270, cysteine 273, cysteine 305, and glutamate 312.

This sequence belongs to the IspG family. The cofactor is [4Fe-4S] cluster.

The enzyme catalyses (2E)-4-hydroxy-3-methylbut-2-enyl diphosphate + oxidized [flavodoxin] + H2O + 2 H(+) = 2-C-methyl-D-erythritol 2,4-cyclic diphosphate + reduced [flavodoxin]. Its pathway is isoprenoid biosynthesis; isopentenyl diphosphate biosynthesis via DXP pathway; isopentenyl diphosphate from 1-deoxy-D-xylulose 5-phosphate: step 5/6. Functionally, converts 2C-methyl-D-erythritol 2,4-cyclodiphosphate (ME-2,4cPP) into 1-hydroxy-2-methyl-2-(E)-butenyl 4-diphosphate. This chain is 4-hydroxy-3-methylbut-2-en-1-yl diphosphate synthase (flavodoxin), found in Aliivibrio fischeri (strain ATCC 700601 / ES114) (Vibrio fischeri).